Consider the following 42-residue polypeptide: Large ribosomal subunit protein eL32 (42 aa).

Belongs to the eukaryotic ribosomal protein eL32 family.

The protein is Large ribosomal subunit protein eL32 (RPL32) of Zea mays (Maize).